The following is a 383-amino-acid chain: Plant intracellular Ras-group-related LRR protein 8 (383 aa).

10 LRR repeats span residues 56-79, 80-102, 104-126, 127-149, 151-173, 174-197, 199-219, 221-244, 245-268, and 270-290; these read RQNI…SINL, ASIS…LVAR, LNLW…IGCL, SKLK…IEDC, SLEE…GFEL, TNLT…SYLT, LRVL…LENL, NLQV…VGLL, ISLV…GCLR, and IQKL…VVEQ. Positions 291–298 match the GVYW; degenerate motif; that stretch reads GLEALKQY.

It belongs to the SHOC2 family. Widely expressed except flowers.

Its function is as follows. Leucine-rich repeat protein that likely mediates protein interactions, possibly in the context of signal transduction. The chain is Plant intracellular Ras-group-related LRR protein 8 (PIRL8) from Arabidopsis thaliana (Mouse-ear cress).